Consider the following 626-residue polypeptide: Transketolase-like protein 2 (626 aa).

Residues S41, H78, and 124–126 (GSL) each bind thiamine diphosphate. Mg(2+) is bound at residue D156. The thiamine diphosphate site is built by G157 and N186. Mg(2+) contacts are provided by N186 and L188. Residues K248 and H262 each coordinate thiamine diphosphate. Substrate is bound by residues H262 and S349. 2 residues coordinate thiamine diphosphate: E370 and F396. E370 (proton donor) is an active-site residue. Substrate is bound by residues H420 and D428. Q432 is a thiamine diphosphate binding site.

The protein belongs to the transketolase family. In terms of assembly, homodimer. Mg(2+) is required as a cofactor. The cofactor is Ca(2+). Requires Mn(2+) as cofactor. Co(2+) serves as cofactor. It depends on thiamine diphosphate as a cofactor. Overexpressed in hepatoma cancer cells.

It catalyses the reaction D-sedoheptulose 7-phosphate + D-glyceraldehyde 3-phosphate = aldehydo-D-ribose 5-phosphate + D-xylulose 5-phosphate. In terms of biological role, plays an essential role in total transketolase activity and cell proliferation in cancer cells; after transfection with anti-TKTL1 siRNA, total transketolase activity dramatically decreases and proliferation was significantly inhibited in cancer cells. Plays a pivotal role in carcinogenesis. This chain is Transketolase-like protein 2 (TKTL2), found in Homo sapiens (Human).